Reading from the N-terminus, the 650-residue chain is FAS-associated factor 1 (650 aa).

Residues 1–57 (MASNMDREMILADFQACTGIENIDEAITLLEQNNWDLVAAINGVIPQENGILQSEYG) enclose the UBA domain. Residues 62–87 (PGPAFNPASHPASAPTSSSSSAFRPV) form a disordered region. Residues 68–83 (PASHPASAPTSSSSSA) show a composition bias toward low complexity. Position 320 is a phosphoserine (S320). In terms of domain architecture, UBX spans 569–646 (NAEPVSKLRI…KLFPQETLFL (78 aa)). A Phosphothreonine modification is found at T580. Position 582 is a phosphoserine (S582).

In terms of assembly, interacts with CDT1 and ATPase VCP/p97. Interacts (via UBA domain) with FAS (via death domain). Interacts (via UBA domain) with NLRP12 (via DAPIN/PYRIN domain). As to expression, most abundant in testis, slightly less abundant in skeletal muscle and heart, followed by prostate, thymus, ovary, small intestine, and colon. Not detected in the peripheral blood leukocytes.

The protein resides in the nucleus. Ubiquitin-binding protein. Required for the progression of DNA replication forks by targeting DNA replication licensing factor CDT1 for degradation. Potentiates but cannot initiate FAS-induced apoptosis. The polypeptide is FAS-associated factor 1 (FAF1) (Homo sapiens (Human)).